Consider the following 406-residue polypeptide: 8-amino-7-oxononanoate synthase (406 aa).

Residue R21 coordinates substrate. A pyridoxal 5'-phosphate-binding site is contributed by 112–113; that stretch reads GY. Residue H137 participates in substrate binding. Residues S183, H211, and T239 each contribute to the pyridoxal 5'-phosphate site. K242 carries the post-translational modification N6-(pyridoxal phosphate)lysine. T358 serves as a coordination point for substrate.

Belongs to the class-II pyridoxal-phosphate-dependent aminotransferase family. BioF subfamily. As to quaternary structure, homodimer. Requires pyridoxal 5'-phosphate as cofactor.

It carries out the reaction 6-carboxyhexanoyl-[ACP] + L-alanine + H(+) = (8S)-8-amino-7-oxononanoate + holo-[ACP] + CO2. The protein operates within cofactor biosynthesis; biotin biosynthesis. Catalyzes the decarboxylative condensation of pimeloyl-[acyl-carrier protein] and L-alanine to produce 8-amino-7-oxononanoate (AON), [acyl-carrier protein], and carbon dioxide. The protein is 8-amino-7-oxononanoate synthase of Burkholderia cenocepacia (strain HI2424).